The following is a 508-amino-acid chain: UTP--glucose-1-phosphate uridylyltransferase (508 aa).

Residue Ser-2 is modified to N-acetylserine. Phosphoserine occurs at positions 2 and 13. UTP is bound by residues 113–116 (LNGG), Lys-127, Gln-190, and Gly-222. 115 to 116 (GG) contributes to the substrate binding site. A Mg(2+)-binding site is contributed by Lys-127. Substrate contacts are provided by residues His-223, 251-253 (NID), and Asn-330. Asp-253 lines the UTP pocket. Mg(2+) is bound at residue Asp-253. Position 396 (Lys-396) interacts with UTP. Lys-396 is an active-site residue. Phosphothreonine is present on Thr-426. The residue at position 434 (Ser-434) is a Phosphoserine. N6-acetyllysine is present on Lys-438. Phosphoserine is present on residues Ser-448 and Ser-461. The tract at residues 457–508 (HLTVSGDVTFGKNVSLKGTVIIIANHGDRIDIPPGAVLENKIVSGNLRILDH) is oligomerization. The interval 502–503 (NL) is critical for end-to-end subunit interaction.

This sequence belongs to the UDPGP type 1 family. In terms of assembly, homooctamer. In terms of tissue distribution, highly expressed in various brain regions. Expressed in amygdala, anterior cingulate cortex, caudate, cerebellar hemisphere, cerebellum, cortex, frontal cortex, hippocampus, hypothalamus, nucleus accumbens, putamen, spinal cord and substantia nigra. Also widely expressed among other tissues, including liver, heart, placenta, lung, kidney, pancreas and skeletal muscle.

The protein localises to the cytoplasm. It carries out the reaction alpha-D-glucose 1-phosphate + UTP + H(+) = UDP-alpha-D-glucose + diphosphate. The protein operates within glycan biosynthesis; glycogen biosynthesis. Functionally, UTP--glucose-1-phosphate uridylyltransferase catalyzing the conversion of glucose-1-phosphate into UDP-glucose, a crucial precursor for the production of glycogen. This chain is UTP--glucose-1-phosphate uridylyltransferase, found in Homo sapiens (Human).